A 338-amino-acid polypeptide reads, in one-letter code: Ribosomal RNA small subunit methyltransferase H (338 aa).

Residues 53–55 (GGH), Asp-72, Tyr-99, Asp-123, and Gln-130 each bind S-adenosyl-L-methionine. Residues 277–298 (ITPRSKSKSPEGLPVELPGMGP) form a disordered region.

This sequence belongs to the methyltransferase superfamily. RsmH family.

It is found in the cytoplasm. It catalyses the reaction cytidine(1402) in 16S rRNA + S-adenosyl-L-methionine = N(4)-methylcytidine(1402) in 16S rRNA + S-adenosyl-L-homocysteine + H(+). Functionally, specifically methylates the N4 position of cytidine in position 1402 (C1402) of 16S rRNA. In Rhodococcus opacus (strain B4), this protein is Ribosomal RNA small subunit methyltransferase H.